Reading from the N-terminus, the 393-residue chain is Glycocyamine kinase (393 aa).

The region spanning 7–94 (REKFAKENFP…FDRVIEEIHH (88 aa)) is the Phosphagen kinase N-terminal domain. One can recognise a Phosphagen kinase C-terminal domain in the interval 120 to 362 (YVKSCRIRCG…NVLIEADKRL (243 aa)). Residues 123–127 (SCRIR), H186, R231, 287–291 (RASVH), 315–320 (RGTGGE), and D330 each bind ATP. Residues 367–393 (PIDDLTPRLNSSTGTSISATASRHMTL) are disordered. The span at 377 to 393 (SSTGTSISATASRHMTL) shows a compositional bias: low complexity.

This sequence belongs to the ATP:guanido phosphotransferase family. In terms of assembly, monomer.

It carries out the reaction guanidinoacetate + ATP = phosphoguanidinoacetate + ADP + H(+). The protein is Glycocyamine kinase of Hediste diversicolor (Sandworm).